A 380-amino-acid polypeptide reads, in one-letter code: Erythronate-4-phosphate dehydrogenase (380 aa).

Substrate contacts are provided by S45 and T66. Residues 126–127 (QV), D146, T174, 205–207 (ASR), and D231 contribute to the NAD(+) site. R207 is an active-site residue. The active site involves E236. H253 acts as the Proton donor in catalysis. G256 contributes to the NAD(+) binding site. Y257 contributes to the substrate binding site.

This sequence belongs to the D-isomer specific 2-hydroxyacid dehydrogenase family. PdxB subfamily. Homodimer.

It is found in the cytoplasm. The enzyme catalyses 4-phospho-D-erythronate + NAD(+) = (R)-3-hydroxy-2-oxo-4-phosphooxybutanoate + NADH + H(+). Its pathway is cofactor biosynthesis; pyridoxine 5'-phosphate biosynthesis; pyridoxine 5'-phosphate from D-erythrose 4-phosphate: step 2/5. Its function is as follows. Catalyzes the oxidation of erythronate-4-phosphate to 3-hydroxy-2-oxo-4-phosphonooxybutanoate. The polypeptide is Erythronate-4-phosphate dehydrogenase (Azotobacter vinelandii (strain DJ / ATCC BAA-1303)).